The sequence spans 305 residues: Dihydroorotate dehydrogenase B (NAD(+)), catalytic subunit (305 aa).

Residues S23 and K47–G48 contribute to the FMN site. Substrate is bound by residues K47 and N71–L75. FMN is bound by residues N101 and N129. N129 serves as a coordination point for substrate. Catalysis depends on C132, which acts as the Nucleophile. FMN contacts are provided by K167 and I193. N194–T195 is a substrate binding site. FMN is bound by residues G219, G245–G246, and G267–T268.

Belongs to the dihydroorotate dehydrogenase family. Type 1 subfamily. As to quaternary structure, heterotetramer of 2 PyrK and 2 PyrD type B subunits. FMN is required as a cofactor.

It is found in the cytoplasm. The enzyme catalyses (S)-dihydroorotate + NAD(+) = orotate + NADH + H(+). It functions in the pathway pyrimidine metabolism; UMP biosynthesis via de novo pathway; orotate from (S)-dihydroorotate (NAD(+) route): step 1/1. Its function is as follows. Catalyzes the conversion of dihydroorotate to orotate with NAD(+) as electron acceptor. This chain is Dihydroorotate dehydrogenase B (NAD(+)), catalytic subunit (pyrD), found in Geobacter metallireducens (strain ATCC 53774 / DSM 7210 / GS-15).